We begin with the raw amino-acid sequence, 1088 residues long: uncharacterized protein (1088 aa).

Position 299 is a phosphoserine (serine 299). Residues proline 954–lysine 980 are disordered. The segment covering serine 956–glutamate 968 has biased composition (low complexity). The residue at position 984 (serine 984) is a Phosphoserine. Threonine 1013 is modified (phosphothreonine). The interval methionine 1063–serine 1088 is disordered. At serine 1081 the chain carries Phosphoserine.

This is an uncharacterized protein from Saccharomyces cerevisiae (strain ATCC 204508 / S288c) (Baker's yeast).